We begin with the raw amino-acid sequence, 369 residues long: Anhydro-N-acetylmuramic acid kinase (369 aa).

Position 12-19 (12-19 (GTSLDGVD)) interacts with ATP.

Belongs to the anhydro-N-acetylmuramic acid kinase family.

The enzyme catalyses 1,6-anhydro-N-acetyl-beta-muramate + ATP + H2O = N-acetyl-D-muramate 6-phosphate + ADP + H(+). It functions in the pathway amino-sugar metabolism; 1,6-anhydro-N-acetylmuramate degradation. The protein operates within cell wall biogenesis; peptidoglycan recycling. In terms of biological role, catalyzes the specific phosphorylation of 1,6-anhydro-N-acetylmuramic acid (anhMurNAc) with the simultaneous cleavage of the 1,6-anhydro ring, generating MurNAc-6-P. Is required for the utilization of anhMurNAc either imported from the medium or derived from its own cell wall murein, and thus plays a role in cell wall recycling. This is Anhydro-N-acetylmuramic acid kinase from Actinobacillus pleuropneumoniae serotype 3 (strain JL03).